The primary structure comprises 43 residues: Antimicrobial protein PcfHb (43 aa).

In terms of assembly, possible monomer. As to expression, expressed in mucus-secreting tissues.

The protein localises to the secreted. Shows antimicrobial activity against M.luteus (MIC=4 uM) and E.coli (MIC=12 uM), as well as against the yeast C.tropicalis (MIC=4 uM). Shows a pro-inflammatory effect, since the topical application of the protein induces an increase of cellular recruitment characterized by an increase in the number of leukocyte rolling. Does not show hemolytic activity on human erythrocytes (at doses up to 100 uM). The polypeptide is Antimicrobial protein PcfHb (Potamotrygon cf. henlei (Freshwater stingray)).